A 798-amino-acid chain; its full sequence is Vacuolar protein sorting-associated protein 53 homolog (798 aa).

It belongs to the VPS53 family. In terms of assembly, component of the Golgi-associated retrograde protein (GARP) complex, also called VFT (VPS fifty-three) complex, composed of vps-51, vps-52, vps-53 and vps-54. Within the complex interacts with vps-51, vps-52 and vps-54. Ubiquitously expressed, with particularly strong expression in neuronal cells. Specifically expressed in head and tail neurons and in the pharynx and ventral cord motor neurons.

It localises to the golgi apparatus. The protein resides in the trans-Golgi network membrane. Its subcellular location is the endosome membrane. The protein localises to the perikaryon. It is found in the cytoplasm. It localises to the perinuclear region. Its function is as follows. Acts as a component of the GARP complex that is involved in retrograde transport from early and late endosomes to the trans-Golgi network (TGN). The GARP complex facilitates tethering as well as SNARE complex assembly at the Golgi. Plays a role in the trafficking of cargo to dense-core vesicles, probably through association with the EARP-interacting protein eipr-1. Important for neuronal function. The chain is Vacuolar protein sorting-associated protein 53 homolog from Caenorhabditis elegans.